The primary structure comprises 288 residues: Energy-coupling factor transporter ATP-binding protein EcfA3 (288 aa).

Positions 3-245 constitute an ABC transporter domain; the sequence is INFRNVSFSY…ESYLRKEKLR (243 aa). 40–47 lines the ATP pocket; that stretch reads GHTGSGKS.

Belongs to the ABC transporter superfamily. Energy-coupling factor EcfA family. As to quaternary structure, forms a stable energy-coupling factor (ECF) transporter complex composed of 2 membrane-embedded substrate-binding proteins (S component), 2 ATP-binding proteins (A component) and 2 transmembrane proteins (T component).

It localises to the cell membrane. In terms of biological role, ATP-binding (A) component of a common energy-coupling factor (ECF) ABC-transporter complex. Unlike classic ABC transporters this ECF transporter provides the energy necessary to transport a number of different substrates. In Oenococcus oeni (strain ATCC BAA-331 / PSU-1), this protein is Energy-coupling factor transporter ATP-binding protein EcfA3.